The primary structure comprises 523 residues: Keratin, type II cytoskeletal 71 (523 aa).

The tract at residues 1–129 (MSRQFTCKSG…DPEIQKVRAQ (129 aa)) is head. The tract at residues 130–165 (EREQIKALNNKFASFIDKVRFLEQQNQVLETKWELL) is coil 1A. The IF rod domain maps to 130–443 (EREQIKALNN…KLLESEECRM (314 aa)). The segment at 166–184 (QQLDLNNCKNNLEPILEGY) is linker 1. A coil 1B region spans residues 185–276 (ISNLRKQLET…CLFEAEITQI (92 aa)). Residues 277–300 (QSHISDMSVILSMDNNRNLDLDSI) form a linker 12 region. A coil 2 region spans residues 301–439 (IDEVRTQYEE…ATYRKLLESE (139 aa)). The segment at 440 to 523 (ECRMSGEFPS…LSAPSKKTSR (84 aa)) is tail. Residues 492-523 (GGEGRSRGSANDYKDTLGKGSSLSAPSKKTSR) form a disordered region. Over residues 493–508 (GEGRSRGSANDYKDTL) the composition is skewed to basic and acidic residues. The segment covering 510-523 (KGSSLSAPSKKTSR) has biased composition (polar residues).

The protein belongs to the intermediate filament family. Heterodimer of a type I and a type II keratin. Associates with KRT16 and/or KRT17. Highly expressed in hair follicles from scalp. Specifically expressed in the inner root sheath (IRS) of the hair follicle. Present in the all 3 IRS layers: the cuticle, the Henle and the Huxley layers. Also detected in the pseudopods of specialized Huxley cells, termed Fluegelzellen, along the area of differentiated Henle cells (at protein level).

It is found in the cytoplasm. The protein localises to the cytoskeleton. Functionally, plays a central role in hair formation. Essential component of keratin intermediate filaments in the inner root sheath (IRS) of the hair follicle. The polypeptide is Keratin, type II cytoskeletal 71 (KRT71) (Homo sapiens (Human)).